The chain runs to 118 residues: Large ribosomal subunit protein bL20 (118 aa).

It belongs to the bacterial ribosomal protein bL20 family.

Its function is as follows. Binds directly to 23S ribosomal RNA and is necessary for the in vitro assembly process of the 50S ribosomal subunit. It is not involved in the protein synthesizing functions of that subunit. The sequence is that of Large ribosomal subunit protein bL20 from Gluconobacter oxydans (strain 621H) (Gluconobacter suboxydans).